The following is a 3259-amino-acid chain: Golgin subfamily B member 1 (3259 aa).

Residue methionine 1 is modified to N-acetylmethionine. Residues 1 to 3235 (MLSRLSGLAN…LRSLCHSRTR (3235 aa)) lie on the Cytoplasmic side of the membrane. Residues serine 6, serine 17, serine 138, and serine 528 each carry the phosphoserine modification. Residues 48–593 (EDVQERLAYA…RAEEADHEVL (546 aa)) adopt a coiled-coil conformation. A disordered region spans residues 119–142 (GTVLPTEPQSEEQLSKHDKSSTEE). The span at 131-142 (QLSKHDKSSTEE) shows a compositional bias: basic and acidic residues. A disordered region spans residues 624–652 (LMPNEESSLPAVEKEQASTEHQSRTSEEI). The span at 635 to 650 (VEKEQASTEHQSRTSE) shows a compositional bias: basic and acidic residues. Serine 653 carries the post-translational modification Phosphoserine. Coiled-coil stretches lie at residues 677–1028 (DIGQ…KEIP), 1062–1245 (LKQT…ESID), and 1301–1779 (GTSV…TEKH). The interval 944 to 963 (AKKEQVEEDNEVSSGLKQNY) is disordered. Over residues 1747-1763 (SEKDSLSEEVQDLKHQI) the composition is skewed to basic and acidic residues. The segment at 1747–1829 (SEKDSLSEEV…SANPAVSKDF (83 aa)) is disordered. Polar residues-rich tracts occupy residues 1782–1794 (QTNV…QSIP) and 1802–1820 (SLSM…SAKS). The stretch at 1828-3185 (DFSSHDEINN…EQIRRLEHSE (1358 aa)) forms a coiled coil. 4 positions are modified to phosphoserine: serine 2216, serine 2735, serine 2872, and serine 2884. Positions 2856 to 2876 (RKSEEGKQRSAAQPSTSPAEV) are disordered. Residues 2865-2875 (SAAQPSTSPAE) show a composition bias toward polar residues. A disordered region spans residues 2998–3021 (TQPLKVQYQRQASPETSASPDGSQ). A Phosphoserine modification is found at serine 3037. Positions 3107 to 3140 (IDVAPGAPQEKNGVHRKSDPEELREPQQSFSEAQ) are disordered. Residues 3118 to 3131 (NGVHRKSDPEELRE) are compositionally biased toward basic and acidic residues. The helical transmembrane segment at 3236-3256 (VPLLAAIYFLMIHVLLILCFT) threads the bilayer. The Lumenal segment spans residues 3257–3259 (GHL).

In terms of assembly, homodimer; disulfide-linked. Interacts with PLK3.

It is found in the golgi apparatus membrane. Functionally, may participate in forming intercisternal cross-bridges of the Golgi complex. The polypeptide is Golgin subfamily B member 1 (GOLGB1) (Homo sapiens (Human)).